The sequence spans 176 residues: Peptidyl-prolyl cis-trans isomerase cyp6 (176 aa).

The PPIase cyclophilin-type domain maps to 10–173 (FFDIAVNGQH…AKIEITDCGE (164 aa)).

The protein belongs to the cyclophilin-type PPIase family.

It catalyses the reaction [protein]-peptidylproline (omega=180) = [protein]-peptidylproline (omega=0). Its function is as follows. PPIases accelerate the folding of proteins. It catalyzes the cis-trans isomerization of proline imidic peptide bonds in oligopeptides. The sequence is that of Peptidyl-prolyl cis-trans isomerase cyp6 (cyp6) from Rhizopus delemar (strain RA 99-880 / ATCC MYA-4621 / FGSC 9543 / NRRL 43880) (Mucormycosis agent).